The following is a 342-amino-acid chain: Protein RecA (342 aa).

65–72 (GPESSGKT) lines the ATP pocket.

This sequence belongs to the RecA family.

Its subcellular location is the cytoplasm. In terms of biological role, can catalyze the hydrolysis of ATP in the presence of single-stranded DNA, the ATP-dependent uptake of single-stranded DNA by duplex DNA, and the ATP-dependent hybridization of homologous single-stranded DNAs. It interacts with LexA causing its activation and leading to its autocatalytic cleavage. The polypeptide is Protein RecA (Teredinibacter turnerae (strain ATCC 39867 / T7901)).